The sequence spans 137 residues: Large ribosomal subunit protein uL16 (137 aa).

The protein belongs to the universal ribosomal protein uL16 family. Part of the 50S ribosomal subunit.

In terms of biological role, binds 23S rRNA and is also seen to make contacts with the A and possibly P site tRNAs. This is Large ribosomal subunit protein uL16 from Rhodopseudomonas palustris (strain BisB18).